Consider the following 304-residue polypeptide: Ribosomal RNA small subunit methyltransferase H (304 aa).

S-adenosyl-L-methionine is bound by residues 37–39 (GGH), Asp57, Phe79, Asp100, and His107.

It belongs to the methyltransferase superfamily. RsmH family.

The protein localises to the cytoplasm. It carries out the reaction cytidine(1402) in 16S rRNA + S-adenosyl-L-methionine = N(4)-methylcytidine(1402) in 16S rRNA + S-adenosyl-L-homocysteine + H(+). Specifically methylates the N4 position of cytidine in position 1402 (C1402) of 16S rRNA. The sequence is that of Ribosomal RNA small subunit methyltransferase H from Bacteroides fragilis (strain YCH46).